A 708-amino-acid chain; its full sequence is Exocyst complex component 5 (708 aa).

The residue at position 2 (Ala2) is an N-acetylalanine. The stretch at 40–101 forms a coiled coil; the sequence is KRLLEEFVNH…AFQHFQELDE (62 aa). Phosphothreonine is present on residues Thr122, Thr395, and Thr405. Position 412 is a phosphoserine (Ser412).

It belongs to the SEC10 family. In terms of assembly, the exocyst complex is composed of EXOC1, EXOC2, EXOC3, EXOC4, EXOC5, EXOC6, EXOC7 and EXOC8. Interacts with EXOC3L1. In terms of tissue distribution, ubiquitous.

Its subcellular location is the cytoplasm. It localises to the midbody. Component of the exocyst complex involved in the docking of exocytic vesicles with fusion sites on the plasma membrane. The polypeptide is Exocyst complex component 5 (Exoc5) (Rattus norvegicus (Rat)).